Reading from the N-terminus, the 328-residue chain is Delta(3,5)-Delta(2,4)-dienoyl-CoA isomerase, mitochondrial (328 aa).

The N-terminal 26 residues, Met1–Gly26, are a transit peptide targeting the mitochondrion. Substrate is bound by residues Ala116–Leu120 and Gly174. The residue at position 231 (Lys231) is an N6-succinyllysine. Ser268 carries the post-translational modification Phosphoserine. The Microbody targeting signal signature appears at Ser326 to Leu328. Lys327 is modified (N6-acetyllysine).

It belongs to the enoyl-CoA hydratase/isomerase family. As to quaternary structure, homohexamer.

It is found in the mitochondrion. It localises to the peroxisome. The catalysed reaction is (3E,5Z)-octadienoyl-CoA = (2E,4E)-octadienoyl-CoA. It carries out the reaction (3E,5Z,8Z,11Z,14Z)-eicosapentaenoyl-CoA = (2E,4E,8Z,11Z,14Z)-eicosapentaenoyl-CoA. The protein operates within lipid metabolism; fatty acid beta-oxidation. In terms of biological role, isomerization of 3-trans,5-cis-dienoyl-CoA to 2-trans,4-trans-dienoyl-CoA. This is Delta(3,5)-Delta(2,4)-dienoyl-CoA isomerase, mitochondrial (ECH1) from Pongo abelii (Sumatran orangutan).